Here is a 173-residue protein sequence, read N- to C-terminus: MVDSYDDAFDGEKSKTQIKRELHALVELGERLTTVKADTLARLPLTDELRKALAEACKHTAHGARKRHMSFVGKLMRDQDLDAIHAVLEQIDSSSRQYNERFHNLERWRDRLIDGNDEDLERFVNEYPDTDRQQLRSLIRHAQHEKARNKPPAAARKVFKYIRDLDELQRGLR.

The protein belongs to the DarP family.

Its subcellular location is the cytoplasm. Member of a network of 50S ribosomal subunit biogenesis factors which assembles along the 30S-50S interface, preventing incorrect 23S rRNA structures from forming. Promotes peptidyl transferase center (PTC) maturation. This is Dual-action ribosomal maturation protein DarP from Pseudomonas putida (strain W619).